We begin with the raw amino-acid sequence, 252 residues long: Adenosylcobinamide-GDP ribazoletransferase (252 aa).

A run of 7 helical transmembrane segments spans residues 35–55, 58–78, 113–133, 139–159, 170–190, 192–212, and 231–251; these read AMLP…FYIL, IFPA…LIGG, FAVL…SFII, YAII…FLIG, LFIE…MIVP, VLLI…IITL, and GANN…LLYI.

The protein belongs to the CobS family. Mg(2+) serves as cofactor.

The protein localises to the cell membrane. The enzyme catalyses alpha-ribazole + adenosylcob(III)inamide-GDP = adenosylcob(III)alamin + GMP + H(+). The catalysed reaction is alpha-ribazole 5'-phosphate + adenosylcob(III)inamide-GDP = adenosylcob(III)alamin 5'-phosphate + GMP + H(+). The protein operates within cofactor biosynthesis; adenosylcobalamin biosynthesis; adenosylcobalamin from cob(II)yrinate a,c-diamide: step 7/7. Its function is as follows. Joins adenosylcobinamide-GDP and alpha-ribazole to generate adenosylcobalamin (Ado-cobalamin). Also synthesizes adenosylcobalamin 5'-phosphate from adenosylcobinamide-GDP and alpha-ribazole 5'-phosphate. In Clostridium tetani (strain Massachusetts / E88), this protein is Adenosylcobinamide-GDP ribazoletransferase.